We begin with the raw amino-acid sequence, 431 residues long: MKRVLAIILGGGAGTRLYPLTKMRAKPAVPLAGKYRLIDIPISNCINSNINKMYVLTQFNSASLNRHLSQTYNLSAGFGQGFVEVLAAQQTPESPSWFEGTADAVRKYQWLFQEWDVDEYLILSGDQLYRMDYSLFINHHRSTGADLTVAALPVDAKQAEAFGLMRTDEDGRILEFREKPKGDSLLEMAVDTSRFGLSAESAKERPYLASMGIYVFSRDTLFDLLHQNPTHKDFGKEVIPEALQRGDRLKSYVFDDYWEDIGTIGAFYEANLALTQQPTPPFSFYDAEFPIYTRPRYLPPSKLVDSQITDSIIGEGSILKSCSIHHSVLGVRSRVEDEVVLQDSLLMGSDFFESSSERAVLRERGGIPLGVGKGTTVKRAILDKNARIGSNVTIVNKDHVEEADRPEHGFYIRNGIVVVVKNASIPDGTVI.

Residues glycine 163, 178–179 (EK), and serine 210 each bind alpha-D-glucose 1-phosphate.

This sequence belongs to the bacterial/plant glucose-1-phosphate adenylyltransferase family. In terms of assembly, homotetramer.

The catalysed reaction is alpha-D-glucose 1-phosphate + ATP + H(+) = ADP-alpha-D-glucose + diphosphate. It functions in the pathway glycan biosynthesis; glycogen biosynthesis. In terms of biological role, involved in the biosynthesis of ADP-glucose, a building block required for the elongation reactions to produce glycogen. Catalyzes the reaction between ATP and alpha-D-glucose 1-phosphate (G1P) to produce pyrophosphate and ADP-Glc. The polypeptide is Glucose-1-phosphate adenylyltransferase (Synechococcus sp. (strain WH7803)).